The sequence spans 294 residues: UPF0761 membrane protein YPK_4186 (294 aa).

Helical transmembrane passes span 44-64, 67-87, 108-128, 136-156, 185-205, 212-232, and 246-266; these read LLSL…FPMF, ISIK…GDII, GLIV…NIIW, LVFS…LVGA, VFPL…VPTV, ALIG…GFAM, and VLAV…IVLL.

It belongs to the UPF0761 family.

The protein resides in the cell inner membrane. This Yersinia pseudotuberculosis serotype O:3 (strain YPIII) protein is UPF0761 membrane protein YPK_4186.